A 237-amino-acid chain; its full sequence is Leucyl/phenylalanyl-tRNA--protein transferase (237 aa).

Belongs to the L/F-transferase family.

The protein localises to the cytoplasm. It catalyses the reaction N-terminal L-lysyl-[protein] + L-leucyl-tRNA(Leu) = N-terminal L-leucyl-L-lysyl-[protein] + tRNA(Leu) + H(+). It carries out the reaction N-terminal L-arginyl-[protein] + L-leucyl-tRNA(Leu) = N-terminal L-leucyl-L-arginyl-[protein] + tRNA(Leu) + H(+). The catalysed reaction is L-phenylalanyl-tRNA(Phe) + an N-terminal L-alpha-aminoacyl-[protein] = an N-terminal L-phenylalanyl-L-alpha-aminoacyl-[protein] + tRNA(Phe). In terms of biological role, functions in the N-end rule pathway of protein degradation where it conjugates Leu, Phe and, less efficiently, Met from aminoacyl-tRNAs to the N-termini of proteins containing an N-terminal arginine or lysine. In Shewanella baltica (strain OS223), this protein is Leucyl/phenylalanyl-tRNA--protein transferase.